A 133-amino-acid polypeptide reads, in one-letter code: MNAVVWWQSLLLVMLGGAFGSGLRFVIGSCLLQRFGAGFPWGTLAVNLIGSFVAGFLLIWVDKRGSAGWSWRMLLIVGLIGGLTTFSSLMVECLVFVRSERSLIVGFYLCITLLFGLLFVFLGARLGAFVCDD.

The next 4 membrane-spanning stretches (helical) occupy residues 3–23 (AVVW…GSGL), 41–61 (WGTL…LIWV), 76–96 (IVGL…CLVF), and 103–123 (LIVG…VFLG). 2 residues coordinate Na(+): G81 and T84.

Belongs to the fluoride channel Fluc/FEX (TC 1.A.43) family.

Its subcellular location is the cell inner membrane. It carries out the reaction fluoride(in) = fluoride(out). Its activity is regulated as follows. Na(+) is not transported, but it plays an essential structural role and its presence is essential for fluoride channel function. In terms of biological role, fluoride-specific ion channel. Important for reducing fluoride concentration in the cell, thus reducing its toxicity. The protein is Fluoride-specific ion channel FluC of Xylella fastidiosa (strain M23).